The sequence spans 593 residues: NADH-quinone oxidoreductase subunit C/D (593 aa).

Residues 1–184 are NADH dehydrogenase I subunit C; that stretch reads MTADNALYIP…DPYSLTLAKQ (184 aa). The NADH dehydrogenase I subunit D stretch occupies residues 208–593; it reads DYMFLNLGPN…IDFVMADVDR (386 aa).

The protein in the N-terminal section; belongs to the complex I 30 kDa subunit family. This sequence in the C-terminal section; belongs to the complex I 49 kDa subunit family. In terms of assembly, NDH-1 is composed of 13 different subunits. Subunits NuoB, CD, E, F, and G constitute the peripheral sector of the complex.

It is found in the cell inner membrane. It carries out the reaction a quinone + NADH + 5 H(+)(in) = a quinol + NAD(+) + 4 H(+)(out). Functionally, NDH-1 shuttles electrons from NADH, via FMN and iron-sulfur (Fe-S) centers, to quinones in the respiratory chain. The immediate electron acceptor for the enzyme in this species is believed to be ubiquinone. Couples the redox reaction to proton translocation (for every two electrons transferred, four hydrogen ions are translocated across the cytoplasmic membrane), and thus conserves the redox energy in a proton gradient. The protein is NADH-quinone oxidoreductase subunit C/D of Pseudomonas syringae pv. tomato (strain ATCC BAA-871 / DC3000).